A 397-amino-acid polypeptide reads, in one-letter code: Elongation factor Tu 1 (397 aa).

The tr-type G domain occupies 10–206 (KPHVNIGTIG…AIDTWIPEPV (197 aa)). The interval 19 to 26 (GHVDHGKT) is G1. 19–26 (GHVDHGKT) contacts GTP. Thr26 contributes to the Mg(2+) binding site. Residues 61-65 (GITIS) form a G2 region. The G3 stretch occupies residues 82-85 (DCPG). Residues 82–86 (DCPGH) and 137–140 (NKCD) contribute to the GTP site. The segment at 137 to 140 (NKCD) is G4. The interval 175 to 177 (SAL) is G5.

It belongs to the TRAFAC class translation factor GTPase superfamily. Classic translation factor GTPase family. EF-Tu/EF-1A subfamily. Monomer.

The protein localises to the cytoplasm. It carries out the reaction GTP + H2O = GDP + phosphate + H(+). Its function is as follows. GTP hydrolase that promotes the GTP-dependent binding of aminoacyl-tRNA to the A-site of ribosomes during protein biosynthesis. This is Elongation factor Tu 1 from Alkaliphilus metalliredigens (strain QYMF).